The following is a 722-amino-acid chain: 1,4-alpha-glucan branching enzyme GlgB (722 aa).

Asp-401 acts as the Nucleophile in catalysis. Residue Glu-454 is the Proton donor of the active site.

This sequence belongs to the glycosyl hydrolase 13 family. GlgB subfamily. Monomer.

The catalysed reaction is Transfers a segment of a (1-&gt;4)-alpha-D-glucan chain to a primary hydroxy group in a similar glucan chain.. It participates in glycan biosynthesis; glycogen biosynthesis. Its function is as follows. Catalyzes the formation of the alpha-1,6-glucosidic linkages in glycogen by scission of a 1,4-alpha-linked oligosaccharide from growing alpha-1,4-glucan chains and the subsequent attachment of the oligosaccharide to the alpha-1,6 position. The protein is 1,4-alpha-glucan branching enzyme GlgB of Rubrobacter xylanophilus (strain DSM 9941 / JCM 11954 / NBRC 16129 / PRD-1).